Reading from the N-terminus, the 129-residue chain is Small ribosomal subunit protein uS11 (129 aa).

Belongs to the universal ribosomal protein uS11 family. As to quaternary structure, part of the 30S ribosomal subunit. Interacts with proteins S7 and S18. Binds to IF-3.

Functionally, located on the platform of the 30S subunit, it bridges several disparate RNA helices of the 16S rRNA. Forms part of the Shine-Dalgarno cleft in the 70S ribosome. The polypeptide is Small ribosomal subunit protein uS11 (Francisella tularensis subsp. tularensis (strain FSC 198)).